Reading from the N-terminus, the 305-residue chain is Alpha-N-acetylgalactosaminide alpha-2,6-sialyltransferase 3 (305 aa).

Residues 1-8 (MACILKRK) lie on the Cytoplasmic side of the membrane. A helical; Signal-anchor for type II membrane protein membrane pass occupies residues 9–28 (PVLVVSFIALCILLLAMRLV). Over 29–305 (NDATFPLLLN…VFTHPNWTLS (277 aa)) the chain is Lumenal. A disulfide bond links Cys-80 and Cys-229. 2 N-linked (GlcNAc...) asparagine glycosylation sites follow: Asn-239 and Asn-301.

The protein belongs to the glycosyltransferase 29 family. As to expression, in adult tissues, high expression in brain, lung and heart and to a lesser extent in kidney, mammary gland, spleen, testis and thymus.

It is found in the golgi apparatus membrane. The catalysed reaction is an alpha-Neu5Ac-(2-&gt;3)-beta-D-Gal-(1-&gt;3)-D-GlcNAc derivative + CMP-N-acetyl-beta-neuraminate = an alpha-Neu5Ac-(2-&gt;3)-beta-D-Gal-(1-&gt;3)-[alpha-Neu5Ac-(2-&gt;6)]-D-GlcNAc derivative + CMP + H(+). The enzyme catalyses a ganglioside GM1b (d18:1(4E)) + CMP-N-acetyl-beta-neuraminate = a ganglioside GD1alpha (d18:1(4E)) + CMP + H(+). It catalyses the reaction a globoside MSGG + CMP-N-acetyl-beta-neuraminate = a globoside DSGG + CMP + H(+). It carries out the reaction 3-O-[alpha-Neu5Ac-(2-&gt;3)-beta-D-Gal-(1-&gt;3)-alpha-D-GalNAc]-L-Ser-[protein] + CMP-N-acetyl-beta-neuraminate = a 3-O-{alpha-Neu5Ac-(2-&gt;3)-beta-D-Gal-(1-&gt;3)-[alpha-Neu5Ac-(2-&gt;6)]-alpha-D-GalNAc}-L-seryl-[protein] + CMP + H(+). The catalysed reaction is 3-O-[alpha-Neu5Ac-(2-&gt;3)-beta-D-Gal-(1-&gt;3)-alpha-D-GalNAc]-L-Thr-[protein] + CMP-N-acetyl-beta-neuraminate = a 3-O-{alpha-Neu5Ac-(2-&gt;3)-beta-D-Gal-(1-&gt;3)-[alpha-Neu5Ac-(2-&gt;6)]-alpha-D-GalNAc}-L-threonyl-[protein] + CMP + H(+). Its pathway is protein modification; protein glycosylation. It functions in the pathway glycolipid biosynthesis. Its function is as follows. Transfers the sialyl group (N-acetyl-alpha-neuraminyl or NeuAc) from CMP-NeuAc to the GalNAc residue on the NeuAc-alpha-2,3-Gal-beta-1,3-GalNAc sequence of glycoproteins and glycolipids forming an alpha-2,6-linkage. Produces branched type disialyl structures by transfer of a sialyl group onto a GalNAc residue inside the backbone core chains. ST6GalNAcIII prefers glycolipids to glycoproteins, predominantly catalyzing the biosynthesis of ganglioside GD1alpha from GM1b. GD1alpha is a critical molecule in the communication and interaction between neuronal cells and their supportive cells, particularly in brain tissues, and functions as an adhesion molecule in the process of metastasis. Sialylation of glycoproteins or glycosphingolipids is very important in tumor development, neuronal development, nerve repair, immunological processes and regulation of hormone sensitivity. The polypeptide is Alpha-N-acetylgalactosaminide alpha-2,6-sialyltransferase 3 (St6galnac3) (Mus musculus (Mouse)).